Consider the following 188-residue polypeptide: UPF0232 protein RHA1_ro03670 (188 aa).

Disordered stretches follow at residues 1–20, 31–78, and 166–188; these read MTDDLEPTAPAAAAPEPEVK, EARA…QPFG, and PTAPSWRKGERHIRGRGPRDTYG. Residues 7 to 16 show a composition bias toward low complexity; it reads PTAPAAAAPE.

It belongs to the UPF0232 family.

The chain is UPF0232 protein RHA1_ro03670 from Rhodococcus jostii (strain RHA1).